We begin with the raw amino-acid sequence, 128 residues long: Sulfurtransferase TusD (128 aa).

The Cysteine persulfide intermediate role is filled by cysteine 78.

It belongs to the DsrE/TusD family. As to quaternary structure, heterohexamer, formed by a dimer of trimers. The hexameric TusBCD complex contains 2 copies each of TusB, TusC and TusD. The TusBCD complex interacts with TusE.

The protein resides in the cytoplasm. In terms of biological role, part of a sulfur-relay system required for 2-thiolation of 5-methylaminomethyl-2-thiouridine (mnm(5)s(2)U) at tRNA wobble positions. Accepts sulfur from TusA and transfers it in turn to TusE. In Buchnera aphidicola subsp. Schizaphis graminum (strain Sg), this protein is Sulfurtransferase TusD.